The chain runs to 644 residues: Alkyldihydroxyacetonephosphate synthase, peroxisomal (644 aa).

The N-terminal 44 residues, 1 to 44 (MAEAAGEAGASERDPDAVRARRRLRVLSGHLLGRPQEAPSTNEC), are a transit peptide targeting the peroxisome. A disordered region spans residues 1–70 (MAEAAGEAGA…PAAPESGTIP (70 aa)). The segment covering 10-19 (ASERDPDAVR) has biased composition (basic and acidic residues). Residues 49–64 (AASAAGASPAASPAAP) show a composition bias toward low complexity. A phosphoserine mark is found at Ser-51 and Ser-56. Lys-88 carries the N6-acetyllysine modification. Positions 188-370 (FERIPDIVVW…TEATIKIRPT (183 aa)) constitute an FAD-binding PCMH-type domain. Residues 220–226 (PIGGGTS), 289–295 (DSLEFSI), and 302–305 (TRAS) each bind FAD. Lys-333 is subject to N6-acetyllysine. Residue 354–360 (EGTLGVI) participates in FAD binding. Arg-501 provides a ligand contact to substrate. The active-site Proton donor/acceptor is Tyr-564. Important for enzyme activity stretches follow at residues 601–603 (HHH) and 640–644 (NRNLL).

This sequence belongs to the FAD-binding oxidoreductase/transferase type 4 family. Homodimer. It depends on FAD as a cofactor.

It localises to the peroxisome membrane. The protein resides in the peroxisome. The enzyme catalyses a long chain fatty alcohol + a 1-acylglycerone 3-phosphate = a 1-O-alkylglycerone 3-phosphate + a long-chain fatty acid + H(+). It catalyses the reaction hexadecan-1-ol + 1-hexadecanoylglycerone 3-phosphate = 1-O-hexadecylglycerone 3-phosphate + hexadecanoate + H(+). It carries out the reaction 1-hexadecanoylglycerone 3-phosphate + a long-chain fatty acid = a 1-acylglycerone 3-phosphate + hexadecanoate. It functions in the pathway glycerolipid metabolism; ether lipid biosynthesis. Its activity is regulated as follows. Inhibited by divalent cation Mg(2+). Catalyzes the exchange of the acyl chain in acyl-dihydroxyacetonephosphate (acyl-DHAP) for a long chain fatty alcohol, yielding the first ether linked intermediate, i.e. alkyl-dihydroxyacetonephosphate (alkyl-DHAP), in the pathway of ether lipid biosynthesis. This chain is Alkyldihydroxyacetonephosphate synthase, peroxisomal (Agps), found in Rattus norvegicus (Rat).